The sequence spans 142 residues: Large ribosomal subunit protein uL11 (142 aa).

Belongs to the universal ribosomal protein uL11 family. In terms of assembly, part of the ribosomal stalk of the 50S ribosomal subunit. Interacts with L10 and the large rRNA to form the base of the stalk. L10 forms an elongated spine to which L12 dimers bind in a sequential fashion forming a multimeric L10(L12)X complex. Post-translationally, one or more lysine residues are methylated.

Functionally, forms part of the ribosomal stalk which helps the ribosome interact with GTP-bound translation factors. The chain is Large ribosomal subunit protein uL11 from Tolumonas auensis (strain DSM 9187 / NBRC 110442 / TA 4).